The sequence spans 61 residues: Large ribosomal subunit protein uL30 (61 aa).

Belongs to the universal ribosomal protein uL30 family. Part of the 50S ribosomal subunit.

This Petrotoga mobilis (strain DSM 10674 / SJ95) protein is Large ribosomal subunit protein uL30.